We begin with the raw amino-acid sequence, 291 residues long: MKIADKTVTRAILERHGFTFKKLFGQNFLTDTNILQKIVDTAEIDKTVNVIEIGPGIGALTEFLAENAAEVMAFEIDDRLVPILADTLRDFDNIKVVNEDILKSDLQTRIKEFANPDLPIKVVANLPYYITTPILMHLIESKIPFAEFVVMMQKEVADRISAQPSTKAYGSLSIAVQYYMTAKIAFIVPRTVFVPAPNVDSAILKMTRREQPLVQVQDEDFFFCVGKAAFVHRRKTLWNNLTSHFGKSEEVKVKLEQALEAADIKPSIRGEELTITDFARLADALREVDLK.

S-adenosyl-L-methionine is bound by residues asparagine 27, leucine 29, glycine 54, glutamate 75, aspartate 100, and asparagine 125.

This sequence belongs to the class I-like SAM-binding methyltransferase superfamily. rRNA adenine N(6)-methyltransferase family. RsmA subfamily.

Its subcellular location is the cytoplasm. The catalysed reaction is adenosine(1518)/adenosine(1519) in 16S rRNA + 4 S-adenosyl-L-methionine = N(6)-dimethyladenosine(1518)/N(6)-dimethyladenosine(1519) in 16S rRNA + 4 S-adenosyl-L-homocysteine + 4 H(+). Specifically dimethylates two adjacent adenosines (A1518 and A1519) in the loop of a conserved hairpin near the 3'-end of 16S rRNA in the 30S particle. May play a critical role in biogenesis of 30S subunits. This is Ribosomal RNA small subunit methyltransferase A from Streptococcus mutans serotype c (strain ATCC 700610 / UA159).